We begin with the raw amino-acid sequence, 232 residues long: Histone H1-II (232 aa).

Positions 1 to 18 (MSDPAPEVAPAAPVASPA) are enriched in low complexity. Disordered regions lie at residues 1–44 (MSDP…PPVS) and 103–232 (GKGA…AKKA). The H15 domain maps to 39 to 114 (THPPVSEMVV…GASGSFKLPA (76 aa)). Basic residues-rich tracts occupy residues 149–171 (SIAKKPKAATATKVKKPVAKSTK) and 179–232 (AAKK…AKKA).

This sequence belongs to the histone H1/H5 family.

The protein resides in the nucleus. It localises to the chromosome. In terms of biological role, histones H1 are necessary for the condensation of nucleosome chains into higher-order structures. The polypeptide is Histone H1-II (Glyptotendipes barbipes (Midge)).